Here is a 405-residue protein sequence, read N- to C-terminus: SPbeta prophage-derived uncharacterized protein YomR (405 aa).

Residues 9–36 (QLKQNNIQINSLRGSNDRAEKHMLEHEQ) adopt a coiled-coil conformation.

This chain is SPbeta prophage-derived uncharacterized protein YomR (yomR), found in Bacillus subtilis (strain 168).